A 715-amino-acid chain; its full sequence is Glycine--tRNA ligase beta subunit (715 aa).

It belongs to the class-II aminoacyl-tRNA synthetase family. Tetramer of two alpha and two beta subunits.

The protein resides in the cytoplasm. The catalysed reaction is tRNA(Gly) + glycine + ATP = glycyl-tRNA(Gly) + AMP + diphosphate. In Nitrosomonas eutropha (strain DSM 101675 / C91 / Nm57), this protein is Glycine--tRNA ligase beta subunit.